We begin with the raw amino-acid sequence, 176 residues long: RING-H2 finger protein ATL14 (176 aa).

Residues 1-26 (MSITIPYDGSISREPSPSPPPPKANT) are disordered. A helical membrane pass occupies residues 37–57 (FLIGLIMIPVAITAFIFILTS). An RING-type; atypical zinc finger spans residues 115-157 (CVVCIDGFRQGQWCRKLPRCGHVFHRKCVDLWLIKVSTCPICR).

The protein belongs to the RING-type zinc finger family. ATL subfamily.

The protein resides in the membrane. It catalyses the reaction S-ubiquitinyl-[E2 ubiquitin-conjugating enzyme]-L-cysteine + [acceptor protein]-L-lysine = [E2 ubiquitin-conjugating enzyme]-L-cysteine + N(6)-ubiquitinyl-[acceptor protein]-L-lysine.. The protein operates within protein modification; protein ubiquitination. This chain is RING-H2 finger protein ATL14 (ATL14), found in Arabidopsis thaliana (Mouse-ear cress).